A 580-amino-acid chain; its full sequence is CRISPR-associated exonuclease Cas4/endonuclease Cas1 fusion (580 aa).

The CRISPR-associated exonuclease Cas4 stretch occupies residues 1-223 (MAPSDTPPSA…RCSLLPICLP (223 aa)). Residue Cys-44 participates in [4Fe-4S] cluster binding. Mn(2+) is bound by residues Asp-112 and Glu-125. [4Fe-4S] cluster-binding residues include Cys-212, Cys-215, and Cys-221. The segment at 248–580 (LYGQTPGARI…IPRYPHYCPR (333 aa)) is CRISPR-associated endonuclease Cas1. Glu-401, His-472, and Glu-487 together coordinate Mn(2+).

This sequence in the N-terminal section; belongs to the CRISPR-associated exonuclease Cas4 family. It in the C-terminal section; belongs to the CRISPR-associated endonuclease Cas1 family. Homodimer, forms a heterotetramer with a Cas2 homodimer. The cofactor is [4Fe-4S] cluster. It depends on Mg(2+) as a cofactor. Mn(2+) is required as a cofactor.

The catalysed reaction is exonucleolytic cleavage in the 5'- to 3'-direction to yield nucleoside 3'-phosphates.. Its function is as follows. CRISPR (clustered regularly interspaced short palindromic repeat), is an adaptive immune system that provides protection against mobile genetic elements (viruses, transposable elements and conjugative plasmids). CRISPR clusters contain spacers, sequences complementary to antecedent mobile elements, and target invading nucleic acids. CRISPR clusters are transcribed and processed into CRISPR RNA (crRNA). The Cas4 region acts as a ssDNA exonuclease, while the Cas1 region acts as a dsDNA endonuclease. Involved in the integration of spacer DNA into the CRISPR cassette. In Rhodospirillum rubrum (strain ATCC 11170 / ATH 1.1.1 / DSM 467 / LMG 4362 / NCIMB 8255 / S1), this protein is CRISPR-associated exonuclease Cas4/endonuclease Cas1 fusion (cas4-cas1).